The following is a 644-amino-acid chain: 1,4-alpha-glucan branching enzyme GlgB (644 aa).

The active-site Nucleophile is Asp-309. The active-site Proton donor is Glu-362.

This sequence belongs to the glycosyl hydrolase 13 family. GlgB subfamily. In terms of assembly, monomer.

It catalyses the reaction Transfers a segment of a (1-&gt;4)-alpha-D-glucan chain to a primary hydroxy group in a similar glucan chain.. The protein operates within glycan biosynthesis; glycogen biosynthesis. Its function is as follows. Catalyzes the formation of the alpha-1,6-glucosidic linkages in glycogen by scission of a 1,4-alpha-linked oligosaccharide from growing alpha-1,4-glucan chains and the subsequent attachment of the oligosaccharide to the alpha-1,6 position. The sequence is that of 1,4-alpha-glucan branching enzyme GlgB from Cutibacterium acnes (strain DSM 16379 / KPA171202) (Propionibacterium acnes).